Here is a 238-residue protein sequence, read N- to C-terminus: Probable tetraspanin tspC (238 aa).

Over 1-16 (MVNTRDFLPKTTHYLK) the chain is Cytoplasmic. A helical transmembrane segment spans residues 17 to 37 (VPIIGLNAILWLLGLVLIVVG). Residues 38–69 (SVCISFFSNFKEFTKESGYKNALSNLTTSAPT) lie on the Extracellular side of the membrane. N-linked (GlcNAc...) asparagine glycosylation occurs at Asn-62. The helical transmembrane segment at 70–90 (GVLVIGIFFILLTLVGCFVAY) threads the bilayer. The Cytoplasmic portion of the chain corresponds to 91-93 (KEK). Residues 94-114 (LVGLVLYTMLMLILLVVLIGI) form a helical membrane-spanning segment. The Extracellular portion of the chain corresponds to 115–197 (GGKALTLDKE…GIFTKQVSSK (83 aa)). Residues Asn-143 and Asn-164 are each glycosylated (N-linked (GlcNAc...) asparagine). Residues 198–218 (LVLVGIAGVVIGCIEFVAMAL) form a helical membrane-spanning segment. The Cytoplasmic portion of the chain corresponds to 219–238 (SLFLIIRICRSPRSRAYDQY).

Belongs to the tetraspanin (TM4SF) family.

The protein resides in the membrane. This Dictyostelium discoideum (Social amoeba) protein is Probable tetraspanin tspC (tspC).